We begin with the raw amino-acid sequence, 901 residues long: Vacuolar protein sorting-associated protein 41 homolog (901 aa).

Residues 1–37 are disordered; that stretch reads MDETHENEASDSFDPVFENSYHDDVTFNTEDDDEPPL. The CHCR repeat unit spans residues 618–760; that stretch reads LRLLLDNADS…VAEFPAHFSQ (143 aa). The RING-type; atypical zinc-finger motif lies at 839–893; sequence CSLCAQIIINSNQETTKKFSDIKVFKCGHIFHLACSTSEMERRQSIEEGLCIACS.

The protein belongs to the VPS41 family. Probable component of the homotypic fusion and vacuole protein sorting (HOPS) complex consisting of the core class C Vps proteins vps-11, vps-16, vps-18, and which further associates with vps-33.1, vps-39 and vps-41.

The protein resides in the endosome membrane. Its subcellular location is the late endosome membrane. It localises to the early endosome membrane. It is found in the lysosome membrane. The protein localises to the golgi apparatus. The protein resides in the trans-Golgi network. Its subcellular location is the cytoplasmic vesicle. It localises to the clathrin-coated vesicle. It is found in the cytoplasm. The protein localises to the cytosol. In terms of biological role, plays a role in vesicle-mediated protein trafficking to lysosomal compartments including the endocytic membrane transport pathways. Believed to act in part as a core component of the putative HOPS endosomal tethering complex which is proposed to be involved in the rab-5-to-rab-7 endosome conversion probably implicating sand-1, and via binding SNAREs and SNARE complexes to mediate tethering and docking events during SNARE-mediated membrane fusion. The HOPS complex is proposed to be recruited to rab-7 on the late endosomal membrane and to regulate late endocytic, phagocytic and autophagic traffic towards lysosomes. Within the HOPS complex, contributes to the normal development of gut granules in the adult intestine. May mediate the tethering of autophagosomes with lysosomes. Has a role in the negative regulation of apoptosis. Required for uptake of exogenous dsRNA which is used in experimental RNA silencing. The polypeptide is Vacuolar protein sorting-associated protein 41 homolog (Caenorhabditis elegans).